A 513-amino-acid chain; its full sequence is Light-independent protochlorophyllide reductase subunit B (513 aa).

Asp-36 lines the [4Fe-4S] cluster pocket. The Proton donor role is filled by Asp-299. A substrate-binding site is contributed by 434 to 435 (GM).

The protein belongs to the ChlB/BchB/BchZ family. In terms of assembly, protochlorophyllide reductase is composed of three subunits; ChlL, ChlN and ChlB. Forms a heterotetramer of two ChlB and two ChlN subunits. It depends on [4Fe-4S] cluster as a cofactor.

It localises to the plastid. The protein resides in the chloroplast. It catalyses the reaction chlorophyllide a + oxidized 2[4Fe-4S]-[ferredoxin] + 2 ADP + 2 phosphate = protochlorophyllide a + reduced 2[4Fe-4S]-[ferredoxin] + 2 ATP + 2 H2O. Its pathway is porphyrin-containing compound metabolism; chlorophyll biosynthesis (light-independent). Component of the dark-operative protochlorophyllide reductase (DPOR) that uses Mg-ATP and reduced ferredoxin to reduce ring D of protochlorophyllide (Pchlide) to form chlorophyllide a (Chlide). This reaction is light-independent. The NB-protein (ChlN-ChlB) is the catalytic component of the complex. This Chaetosphaeridium globosum (Charophycean green alga) protein is Light-independent protochlorophyllide reductase subunit B.